The chain runs to 228 residues: Sodium channel regulatory subunit beta-4 (228 aa).

Residues 1-30 (MPGAGDGGKAPARWLGTGLLGLFLLPVTLS) form the signal peptide. The Ig-like C2-type domain occupies 31–148 (LEVSVGKATD…NNLQHHATIF (118 aa)). The Extracellular segment spans residues 31 to 162 (LEVSVGKATD…DRLEEVDNTV (132 aa)). Residues asparagine 45, asparagine 71, and asparagine 113 are each glycosylated (N-linked (GlcNAc...) asparagine). Cysteine 53 and cysteine 131 form a disulfide bridge. The chain crosses the membrane as a helical span at residues 163 to 183 (TLIILAVVGGVIGLLILILLI). The Cytoplasmic portion of the chain corresponds to 184-228 (KKLIIFILKKTREKKKECLVSSSGNDNTENGLPGSKAEEKPPSKV). Residues 200-228 (ECLVSSSGNDNTENGLPGSKAEEKPPSKV) form a disordered region. Residues 203-213 (VSSSGNDNTEN) are compositionally biased toward polar residues. The segment covering 219 to 228 (KAEEKPPSKV) has biased composition (basic and acidic residues).

The protein belongs to the sodium channel auxiliary subunit SCN4B (TC 8.A.17) family. As to quaternary structure, a voltage-gated sodium (Nav) channel consists of an ion-conducting pore-forming alpha subunit functional on its own that is regulated by one or more beta subunits. The beta subunit SCN4B is disulfide-linked to the pore-forming alpha subunit. Interacts with SCN1A; regulatory subunit of SCN1A/Nav1.1. Interacts with SCN2A; regulatory subunit of SCN2A/Nav1.2. In terms of processing, contains an interchain disulfide bond with SCN2A. N-glycosylated. In terms of tissue distribution, expressed at a high level in dorsal root ganglia, at a lower level in brain, spinal cord, skeletal muscle and heart. Expressed in the atrium.

The protein resides in the cell membrane. Regulatory subunit of multiple voltage-gated sodium (Nav) channels directly mediating the depolarization of excitable membranes. Navs, also called VGSCs (voltage-gated sodium channels) or VDSCs (voltage-dependent sodium channels), operate by switching between closed and open conformations depending on the voltage difference across the membrane. In the open conformation they allow Na(+) ions to selectively pass through the pore, along their electrochemical gradient. The influx of Na+ ions provokes membrane depolarization, initiating the propagation of electrical signals throughout cells and tissues. The accessory beta subunits participate in localization and functional modulation of the Nav channels. Modulates the activity of SCN1A/Nav1.1. Modulates the activity of SCN2A/Nav1.2. The protein is Sodium channel regulatory subunit beta-4 of Homo sapiens (Human).